Reading from the N-terminus, the 237-residue chain is Ribonuclease 3 (237 aa).

The RNase III domain maps to 4-130 (IQILFQTLNI…LFGAIYLDLG (127 aa)). Position 45 (Glu45) interacts with Mg(2+). The active site involves Asp49. Asp116 and Glu119 together coordinate Mg(2+). Glu119 is a catalytic residue. The region spanning 154–222 (DFKTQLQEIV…AQQALSKVAK (69 aa)) is the DRBM domain.

Belongs to the ribonuclease III family. In terms of assembly, homodimer. Mg(2+) serves as cofactor.

Its subcellular location is the cytoplasm. The catalysed reaction is Endonucleolytic cleavage to 5'-phosphomonoester.. Its function is as follows. Digests double-stranded RNA. Involved in the processing of primary rRNA transcript to yield the immediate precursors to the large and small rRNAs (23S and 16S). Processes some mRNAs, and tRNAs when they are encoded in the rRNA operon. Processes pre-crRNA and tracrRNA of type II CRISPR loci if present in the organism. In Aster yellows witches'-broom phytoplasma (strain AYWB), this protein is Ribonuclease 3.